The sequence spans 114 residues: T cell receptor beta variable 5-8 (114 aa).

Residues 1 to 21 (MGPRLLFWALLCLLGTGPVEA) form the signal peptide. The Ig-like domain occupies 22-114 (GVTQSPTHLI…SALYLCASSL (93 aa)). Cys42 and Cys110 are disulfide-bonded. Asn90 carries an N-linked (GlcNAc...) asparagine glycan.

Alpha-beta TR is a heterodimer composed of an alpha and beta chain; disulfide-linked. The alpha-beta TR is associated with the transmembrane signaling CD3 coreceptor proteins to form the TR-CD3 (TcR or TCR). The assembly of alpha-beta TR heterodimers with CD3 occurs in the endoplasmic reticulum where a single alpha-beta TR heterodimer associates with one CD3D-CD3E heterodimer, one CD3G-CD3E heterodimer and one CD247 homodimer forming a stable octameric structure. CD3D-CD3E and CD3G-CD3E heterodimers preferentially associate with TR alpha and TR beta chains, respectively. The association of the CD247 homodimer is the last step of TcR assembly in the endoplasmic reticulum and is required for transport to the cell surface.

The protein localises to the cell membrane. V region of the variable domain of T cell receptor (TR) beta chain that participates in the antigen recognition. Alpha-beta T cell receptors are antigen specific receptors which are essential to the immune response and are present on the cell surface of T lymphocytes. Recognize peptide-major histocompatibility (MH) (pMH) complexes that are displayed by antigen presenting cells (APC), a prerequisite for efficient T cell adaptive immunity against pathogens. Binding of alpha-beta TR to pMH complex initiates TR-CD3 clustering on the cell surface and intracellular activation of LCK that phosphorylates the ITAM motifs of CD3G, CD3D, CD3E and CD247 enabling the recruitment of ZAP70. In turn ZAP70 phosphorylates LAT, which recruits numerous signaling molecules to form the LAT signalosome. The LAT signalosome propagates signal branching to three major signaling pathways, the calcium, the mitogen-activated protein kinase (MAPK) kinase and the nuclear factor NF-kappa-B (NF-kB) pathways, leading to the mobilization of transcription factors that are critical for gene expression and essential for T cell growth and differentiation. The T cell repertoire is generated in the thymus, by V-(D)-J rearrangement. This repertoire is then shaped by intrathymic selection events to generate a peripheral T cell pool of self-MH restricted, non-autoaggressive T cells. Post-thymic interaction of alpha-beta TR with the pMH complexes shapes TR structural and functional avidity. The sequence is that of T cell receptor beta variable 5-8 from Homo sapiens (Human).